The sequence spans 199 residues: MAEEQVLNTHNASILLSAANKSHYPQDDLPEIALAGRSNVGKSSFINTILGRKNLARTSSKPGKTQLLNFFNIDDKLRFVDVPGYGYAKVSKSERAEWGKMIEEYLTSRDNLRAVVSLVDLRHAPSKEDIQMYDFLKYYDIPVIVVATKADKIPRGKWNKHESVVKKALNFDKSDTFIVFSSVERIGIDDSWDAILEQV.

One can recognise an EngB-type G domain in the interval 28–199 (DLPEIALAGR…DSWDAILEQV (172 aa)). GTP-binding positions include 36–43 (GRSNVGKS), 63–67 (GKTQL), 81–84 (DVPG), 148–151 (TKAD), and 180–182 (FSS). Mg(2+)-binding residues include Ser-43 and Thr-65.

Belongs to the TRAFAC class TrmE-Era-EngA-EngB-Septin-like GTPase superfamily. EngB GTPase family. The cofactor is Mg(2+).

In terms of biological role, necessary for normal cell division and for the maintenance of normal septation. This chain is Probable GTP-binding protein EngB, found in Streptococcus pyogenes serotype M18 (strain MGAS8232).